The primary structure comprises 362 residues: Spermidine/putrescine import ATP-binding protein PotA (362 aa).

The 232-residue stretch at Ile-6–Ile-237 folds into the ABC transporter domain. ATP is bound at residue Gly-39–Thr-46.

Belongs to the ABC transporter superfamily. Spermidine/putrescine importer (TC 3.A.1.11.1) family. The complex is composed of two ATP-binding proteins (PotA), two transmembrane proteins (PotB and PotC) and a solute-binding protein (PotD).

It is found in the cell membrane. It catalyses the reaction ATP + H2O + polyamine-[polyamine-binding protein]Side 1 = ADP + phosphate + polyamineSide 2 + [polyamine-binding protein]Side 1.. In terms of biological role, part of the ABC transporter complex PotABCD involved in spermidine/putrescine import. Responsible for energy coupling to the transport system. This is Spermidine/putrescine import ATP-binding protein PotA from Ligilactobacillus salivarius (strain UCC118) (Lactobacillus salivarius).